Consider the following 1098-residue polypeptide: Probable arabinosyltransferase B (1098 aa).

A run of 12 helical transmembrane segments spans residues 28 to 50, 217 to 239, 271 to 293, 402 to 419, 434 to 456, 472 to 494, 541 to 558, 570 to 587, 597 to 619, 626 to 648, 663 to 685, and 698 to 720; these read WVAT…LPVV, LKLL…LWRL, ASWR…WHVI, LRPE…YVLI, AVVT…AALV, LVGT…TVVF, FGFL…FIML, PAWR…FLMF, GLFA…PSVL, MAFL…GWWY, IDGI…YAAW, and LIRA…VFVA.

The protein belongs to the emb family.

The protein localises to the cell membrane. Arabinosyl transferase responsible for the polymerization of arabinose into the arabinan of arabinogalactan. This Mycobacterium tuberculosis (strain CDC 1551 / Oshkosh) protein is Probable arabinosyltransferase B (embB).